Reading from the N-terminus, the 161-residue chain is Cyclic pyranopterin monophosphate synthase (161 aa).

Residues 75-77 and 113-114 contribute to the substrate site; these read LCH and ME. Asp128 is a catalytic residue.

It belongs to the MoaC family. As to quaternary structure, homohexamer; trimer of dimers.

It carries out the reaction (8S)-3',8-cyclo-7,8-dihydroguanosine 5'-triphosphate = cyclic pyranopterin phosphate + diphosphate. It functions in the pathway cofactor biosynthesis; molybdopterin biosynthesis. In terms of biological role, catalyzes the conversion of (8S)-3',8-cyclo-7,8-dihydroguanosine 5'-triphosphate to cyclic pyranopterin monophosphate (cPMP). This is Cyclic pyranopterin monophosphate synthase from Salmonella dublin (strain CT_02021853).